Consider the following 267-residue polypeptide: Protein LicA (267 aa).

This sequence belongs to the peptidase S49 family.

Functionally, mediates phase variation of the LPS epitopes. Phase variation of H.influenza LPS epitopes expressed by LicA is determined by a translational switch. In Haemophilus influenzae (strain ATCC 51907 / DSM 11121 / KW20 / Rd), this protein is Protein LicA (licA).